Reading from the N-terminus, the 44-residue chain is Mu-conotoxin-like Cal 12.1.2h (44 aa).

4 disulfides stabilise this stretch: cysteine 3–cysteine 16, cysteine 11–cysteine 28, cysteine 18–cysteine 33, and cysteine 27–cysteine 38. Tryptophan 17 is subject to 6'-bromotryptophan. At proline 23 the chain carries 4-hydroxyproline. 6'-bromotryptophan occurs at positions 36 and 37. Proline 39 carries the post-translational modification 4-hydroxyproline. Tryptophan 43 carries the 6'-bromotryptophan modification.

Expressed by the venom duct.

The protein resides in the secreted. Its function is as follows. Mu-conotoxins block voltage-gated sodium channels. This toxin reversibly blocks voltage-gated sodium channel in cephalopods, with no alteration in the voltage dependence of sodium conductance or on the kinetics of inactivation. The sequence is that of Mu-conotoxin-like Cal 12.1.2h from Californiconus californicus (California cone).